Consider the following 307-residue polypeptide: DDRGK domain-containing protein 1 (307 aa).

Residues M1–D2 lie on the Lumenal side of the membrane. The helical transmembrane segment at L3 to L23 threads the bilayer. Over Q24–A307 the chain is Cytoplasmic. The interval E31–R175 is disordered. The span at R52–V83 shows a compositional bias: low complexity. Basic and acidic residues predominate over residues L107–R175.

Belongs to the DDRGK1 family. In terms of assembly, interacts with Atg9; the interaction is transient.

Its subcellular location is the endoplasmic reticulum membrane. Its function is as follows. Substrate adapter for ufmylation, the covalent attachment of the ubiquitin-like modifier UFM1 to substrate proteins. Required for ufmylation of Atg9; protects the nervous system during aging, possibly by stabilizing Atg9 and supporting its function. In Drosophila virilis (Fruit fly), this protein is DDRGK domain-containing protein 1.